The primary structure comprises 109 residues: Nucleoid-associated protein Cvib_1034 (109 aa).

This sequence belongs to the YbaB/EbfC family. Homodimer.

The protein resides in the cytoplasm. It is found in the nucleoid. Functionally, binds to DNA and alters its conformation. May be involved in regulation of gene expression, nucleoid organization and DNA protection. The sequence is that of Nucleoid-associated protein Cvib_1034 from Chlorobium phaeovibrioides (strain DSM 265 / 1930) (Prosthecochloris vibrioformis (strain DSM 265)).